Consider the following 196-residue polypeptide: Carnitine operon protein CaiE (196 aa).

Positions 173–196 are disordered; that stretch reads TQPLRQMEENRPRLQGTTDVTPKR. Over residues 187 to 196 the composition is skewed to polar residues; it reads QGTTDVTPKR.

This sequence belongs to the transferase hexapeptide repeat family.

It participates in amine and polyamine metabolism; carnitine metabolism. Its function is as follows. Overproduction of CaiE stimulates the activity of CaiB and CaiD. This is Carnitine operon protein CaiE from Shigella dysenteriae serotype 1 (strain Sd197).